A 199-amino-acid chain; its full sequence is MLIVGPPGAGKGTQASRITSGYGIPDISTGDIFRANIKNKTELGQQVKAIVDAGDYVPDSLTNELVTGRLAEDDAKGGFLLDGYPRTLEQVKYLDELLGSDGEKLDAVIQLVADREEIVARLTKRAREQGRADDSEEAIRYRQEVYVRETSPLIEVYRERGLLVEVDGLGPVDEVAGRICTALAERGILPLTGTGESVA.

Gly8–Thr13 provides a ligand contact to ATP. The interval Ser28–Val57 is NMP. AMP contacts are provided by residues Thr29, Arg34, Asp55 to Val57, Gly83 to Arg86, and Gln90. The tract at residues Lys124–Asp134 is LID. Arg125 contributes to the ATP binding site. Arg131 and Arg142 together coordinate AMP. Position 170 (Gly170) interacts with ATP.

The protein belongs to the adenylate kinase family. In terms of assembly, monomer.

It is found in the cytoplasm. It catalyses the reaction AMP + ATP = 2 ADP. It functions in the pathway purine metabolism; AMP biosynthesis via salvage pathway; AMP from ADP: step 1/1. Its function is as follows. Catalyzes the reversible transfer of the terminal phosphate group between ATP and AMP. Plays an important role in cellular energy homeostasis and in adenine nucleotide metabolism. This chain is Adenylate kinase, found in Leifsonia xyli subsp. xyli (strain CTCB07).